Here is a 391-residue protein sequence, read N- to C-terminus: 1-deoxy-D-xylulose 5-phosphate reductoisomerase (391 aa).

NADPH-binding residues include Thr10, Gly11, Ser12, Ile13, Asn38, and Asn122. Lys123 is a binding site for 1-deoxy-D-xylulose 5-phosphate. Glu124 contributes to the NADPH binding site. Mn(2+) is bound at residue Asp148. 1-deoxy-D-xylulose 5-phosphate is bound by residues Ser149, Glu150, Ser173, and His196. Position 150 (Glu150) interacts with Mn(2+). Gly202 lines the NADPH pocket. 1-deoxy-D-xylulose 5-phosphate contacts are provided by Ser209, Asn214, Lys215, and Glu218. Glu218 contributes to the Mn(2+) binding site.

It belongs to the DXR family. Mg(2+) is required as a cofactor. The cofactor is Mn(2+).

The catalysed reaction is 2-C-methyl-D-erythritol 4-phosphate + NADP(+) = 1-deoxy-D-xylulose 5-phosphate + NADPH + H(+). It participates in isoprenoid biosynthesis; isopentenyl diphosphate biosynthesis via DXP pathway; isopentenyl diphosphate from 1-deoxy-D-xylulose 5-phosphate: step 1/6. In terms of biological role, catalyzes the NADPH-dependent rearrangement and reduction of 1-deoxy-D-xylulose-5-phosphate (DXP) to 2-C-methyl-D-erythritol 4-phosphate (MEP). The polypeptide is 1-deoxy-D-xylulose 5-phosphate reductoisomerase (Wolbachia pipientis subsp. Culex pipiens (strain wPip)).